Reading from the N-terminus, the 150-residue chain is Probable cyclic pyranopterin monophosphate synthase (150 aa).

Residues 68–70 and 104–105 each bind substrate; these read YCH and ME. The active site involves Asp119.

This sequence belongs to the MoaC family. As to quaternary structure, homohexamer; trimer of dimers.

It carries out the reaction (8S)-3',8-cyclo-7,8-dihydroguanosine 5'-triphosphate = cyclic pyranopterin phosphate + diphosphate. It functions in the pathway cofactor biosynthesis; molybdopterin biosynthesis. In terms of biological role, catalyzes the conversion of (8S)-3',8-cyclo-7,8-dihydroguanosine 5'-triphosphate to cyclic pyranopterin monophosphate (cPMP). This Thermoplasma volcanium (strain ATCC 51530 / DSM 4299 / JCM 9571 / NBRC 15438 / GSS1) protein is Probable cyclic pyranopterin monophosphate synthase.